Consider the following 60-residue polypeptide: Mastoparan-VT5 (60 aa).

The N-terminal stretch at 1–27 (MKNTILILFTAFIALLGFFGMIAEPLA) is a signal peptide. AXPX repeat units lie at residues 27-30 (ADPL), 31-34 (ADPL), 37-40 (ADPD), and 41-44 (ADPE). Residues 28 to 45 (DPLADPLPDADPDADPET) constitute a propeptide that is removed on maturation.

It belongs to the MCD family. Mastoparan subfamily. Expressed by the venom gland.

It is found in the secreted. The synthetic peptide shows weak antimicrobial activities against a few Gram-positive bacteria (only 2 on the 11 strains tested) and the fungus C.albicans. Does not show activity against all the Gram-negative bacteria tested. Exhibits little hemolytic activity against washed human erythrocytes. In Vespa tropica (Greater banded hornet), this protein is Mastoparan-VT5.